The primary structure comprises 265 residues: Phosphate import ATP-binding protein PstB (265 aa).

The region spanning 11 to 260 (VSADEVKIAA…PRDPRTESYI (250 aa)) is the ABC transporter domain. 50 to 57 (GPSGCGKS) lines the ATP pocket.

This sequence belongs to the ABC transporter superfamily. Phosphate importer (TC 3.A.1.7) family. The complex is composed of two ATP-binding proteins (PstB), two transmembrane proteins (PstC and PstA) and a solute-binding protein (PstS).

It is found in the cell inner membrane. It catalyses the reaction phosphate(out) + ATP + H2O = ADP + 2 phosphate(in) + H(+). Its function is as follows. Part of the ABC transporter complex PstSACB involved in phosphate import. Responsible for energy coupling to the transport system. The chain is Phosphate import ATP-binding protein PstB from Cereibacter sphaeroides (strain ATCC 17023 / DSM 158 / JCM 6121 / CCUG 31486 / LMG 2827 / NBRC 12203 / NCIMB 8253 / ATH 2.4.1.) (Rhodobacter sphaeroides).